The chain runs to 586 residues: Guanylate-binding protein 5 (586 aa).

The segment at 1 to 306 (MALEIHMSDP…TYVNAISSGD (306 aa)) is NLRP3-binding. The GTPase domain (Globular) stretch occupies residues 1–309 (MALEIHMSDP…NAISSGDLPC (309 aa)). Positions 35 to 276 (TQPVVVVAIV…FCSYIFSHSM (242 aa)) constitute a GB1/RHD3-type G domain. GTP is bound by residues 45–52 (GLYRTGKS), 67–69 (VAS), 181–182 (RD), and Leu-245. The tract at residues 529-586 (MEIAKQNWLAEQQKMQEQQMQEQAAQLSTTFQAQNRSLLSELQHAQRTVNNDDPCVLL) is required for tetramerization, but not for dimerization. Residue Cys-583 is modified to Cysteine methyl ester. Cys-583 is lipidated: S-geranylgeranyl cysteine. A propeptide spans 584-586 (VLL) (removed in mature form).

It belongs to the TRAFAC class dynamin-like GTPase superfamily. GB1/RHD3 GTPase family. GB1 subfamily. Homodimer; homodimerizes upon GTP-binding, forming a close face-to-face dimer. Heterodimer with other family members, including GBP1, GBP2, GBP3 and GBP4. May also form tetramers (dimer of dimers) in the presence of GTP. Interacts with NLRP3, possibly in its tetrameric form, and promotes PYCARD/ASC polymerization. As to quaternary structure, homodimer; homodimerizes upon GTP-binding. GDP-bound form remains homodimeric. In terms of assembly, homodimer; homodimerizes upon GTP-binding. GDP-bound is monomeric. Post-translationally, isoprenylation is required for proper subcellular location. In terms of tissue distribution, expressed in peripheral blood monocytes (at protein level).

It is found in the cytoplasmic vesicle membrane. Its subcellular location is the golgi apparatus membrane. It localises to the cytoplasm. The enzyme catalyses GTP + H2O = GDP + phosphate + H(+). Functionally, interferon (IFN)-inducible GTPase that plays important roles in innate immunity against a diverse range of bacterial, viral and protozoan pathogens. Hydrolyzes GTP, but in contrast to other family members, does not produce GMP. Following infection, recruited to the pathogen-containing vacuoles or vacuole-escaped bacteria and acts as a positive regulator of inflammasome assembly by promoting the release of inflammasome ligands from bacteria. Acts by promoting lysis of pathogen-containing vacuoles, releasing pathogens into the cytosol. Following pathogen release in the cytosol, promotes recruitment of proteins that mediate bacterial cytolysis: this liberates ligands that are detected by inflammasomes, such as lipopolysaccharide (LPS) that activates the non-canonical CASP4/CASP11 inflammasome or double-stranded DNA (dsDNA) that activates the AIM2 inflammasome. As an activator of NLRP3 inflammasome assembly: promotes selective NLRP3 inflammasome assembly in response to microbial and soluble, but not crystalline, agents. Independently of its GTPase activity, acts as an inhibitor of various viruses infectivity, such as HIV-1, Zika and influenza A viruses, by inhibiting FURIN-mediated maturation of viral envelope proteins. Its function is as follows. Antigenic tumor-specific truncated splice form. The protein is Guanylate-binding protein 5 of Homo sapiens (Human).